Reading from the N-terminus, the 402-residue chain is Tyrosine-protein kinase transforming protein ros (402 aa).

Positions 98 to 377 (LNLHKLLGSG…KLQEIRHSPL (280 aa)) constitute a Protein kinase domain. Residues 104–112 (LGSGAFGEV) and K133 contribute to the ATP site. The active-site Proton acceptor is the D232. The residue at position 268 (Y268) is a Phosphotyrosine; by autocatalysis.

The protein belongs to the protein kinase superfamily. Tyr protein kinase family. Insulin receptor subfamily.

The enzyme catalyses L-tyrosyl-[protein] + ATP = O-phospho-L-tyrosyl-[protein] + ADP + H(+). This is Tyrosine-protein kinase transforming protein ros (V-ROS) from Galliformes (UR2SV).